The sequence spans 347 residues: Dihydroorotase (347 aa).

Zn(2+) contacts are provided by His-17 and His-19. Residues His-19 to Arg-21 and Asn-45 contribute to the substrate site. Zn(2+)-binding residues include Lys-102, His-139, and His-177. Lys-102 is modified (N6-carboxylysine). His-139 serves as a coordination point for substrate. A substrate-binding site is contributed by Leu-222. Asp-250 contacts Zn(2+). Asp-250 is an active-site residue. 2 residues coordinate substrate: His-254 and Ala-266.

Belongs to the metallo-dependent hydrolases superfamily. DHOase family. Class II DHOase subfamily. As to quaternary structure, homodimer. Zn(2+) serves as cofactor.

The enzyme catalyses (S)-dihydroorotate + H2O = N-carbamoyl-L-aspartate + H(+). It participates in pyrimidine metabolism; UMP biosynthesis via de novo pathway; (S)-dihydroorotate from bicarbonate: step 3/3. Catalyzes the reversible cyclization of carbamoyl aspartate to dihydroorotate. The chain is Dihydroorotase from Acidovorax sp. (strain JS42).